Reading from the N-terminus, the 126-residue chain is Large ribosomal subunit protein bL12 (126 aa).

This sequence belongs to the bacterial ribosomal protein bL12 family. As to quaternary structure, homodimer. Part of the ribosomal stalk of the 50S ribosomal subunit. Forms a multimeric L10(L12)X complex, where L10 forms an elongated spine to which 2 to 4 L12 dimers bind in a sequential fashion. Binds GTP-bound translation factors.

In terms of biological role, forms part of the ribosomal stalk which helps the ribosome interact with GTP-bound translation factors. Is thus essential for accurate translation. This Chlorobaculum tepidum (strain ATCC 49652 / DSM 12025 / NBRC 103806 / TLS) (Chlorobium tepidum) protein is Large ribosomal subunit protein bL12.